A 171-amino-acid chain; its full sequence is Large ribosomal subunit protein bL17 (171 aa).

Residues 140–152 (KREIQTKAREEKR) are compositionally biased toward basic and acidic residues. The interval 140–171 (KREIQTKAREEKRATRKSNSAPVSKETTSKKK) is disordered. Residues 156-165 (KSNSAPVSKE) show a composition bias toward polar residues.

The protein belongs to the bacterial ribosomal protein bL17 family. Part of the 50S ribosomal subunit. Contacts protein L32.

The polypeptide is Large ribosomal subunit protein bL17 (Leptospira interrogans serogroup Icterohaemorrhagiae serovar copenhageni (strain Fiocruz L1-130)).